The following is a 1150-amino-acid chain: BAI1-associated protein 3 (1150 aa).

The tract at residues 22–44 (RRKTEQEPEVTNSQEPPTGAWKP) is disordered. In terms of domain architecture, C2 1 spans 139-298 (SSEEHMEAIM…VKSARANGTA (160 aa)). Ca(2+) is bound by residues D174 and D180. Residues 193–214 (APQEPSGQKEQRFGFRKGSKRS) are disordered. The Ca(2+) site is built by D258 and D260. Residues 626 to 747 (FELYLTLADT…EASLFYTELL (122 aa)) enclose the MHD1 domain. The 109-residue stretch at 851 to 959 (DEAVAPLLKY…CSTRECIEQF (109 aa)) folds into the MHD2 domain. Residues 973-1099 (RFGRLTVRCH…GIARPHVGGG (127 aa)) form the C2 2 domain. Positions 1003, 1004, 1010, 1068, 1070, 1073, and 1076 each coordinate Ca(2+).

It belongs to the unc-13 family. As to quaternary structure, interacts with ADGRB1, this interaction is direct. Interacts with endosomal SNARE proteins VAMP3, VAMP4, STX6 and STX16; this interaction is increased in the presence of calcium. The cofactor is Ca(2+). As to expression, prominently expressed in brain structures including hypothalamus, amygdala, stria terminalis and periaqueductal gray (at protein level). Expressed in nonneuronal tissues, including placenta, lung, pancreas, spleen, and testes. Within placenta, expression is restricted to the syncytiotrophoblasts.

The protein localises to the cytoplasm. The protein resides in the cytosol. Its subcellular location is the recycling endosome membrane. It is found in the late endosome membrane. It localises to the golgi apparatus. The protein localises to the trans-Golgi network membrane. The protein resides in the cell membrane. In terms of biological role, functions in endosome to Golgi retrograde transport. In response to calcium influx, may interact with SNARE fusion receptors and membrane phospholipids to mediate endosome fusion with the trans-Golgi network. By promoting the recycling of secretory vesicle transmembrane proteins, it indirectly controls dense-core secretory vesicle biogenesis, maturation and their ability to mediate the constitutive and regulated secretion of neurotransmitters and hormones. May regulate behavior and food intake by controlling calcium-stimulated exocytosis of neurotransmitters including NPY and serotonin and hormones like insulin. Proposed to play a role in hypothalamic neuronal firing by modulating gamma-aminobutyric acid (GABA)ergic inhibitory neurotransmission. This Mus musculus (Mouse) protein is BAI1-associated protein 3.